Here is a 35-residue protein sequence, read N- to C-terminus: PTEN upstream open reading frame MP31 (35 aa).

Interacts with lactate dehydrogenases LDHA and LDHB; interaction with mitochondrial LDH leads to inhibition of lactate dehydrogenase activity, preventing conversion of lactate to pyruvate. Detected in brain, kidney and liver (at protein level).

The protein resides in the mitochondrion. In terms of biological role, inhibits lactate dehydrogenase (LDH)-mediated conversion of lactate to pyruvate in mitochondria by competing with mitochondrial LDH for binding to NAD(+). Also inhibits cellular lactate utilization. This is PTEN upstream open reading frame MP31 from Mus musculus (Mouse).